The chain runs to 207 residues: Nuclear transcription factor Y subunit beta (207 aa).

Residues 1–52 (MTMDGDSSTTDASQLGISADYIGGSHYVIQPHDDTEDSMNDHEDTNGSKESF) are a domain. Residues 27–52 (YVIQPHDDTEDSMNDHEDTNGSKESF) form a disordered region. The segment covering 39-52 (MNDHEDTNGSKESF) has biased composition (basic and acidic residues). Residues 53–142 (REQDIYLPIA…PLKLYLQKFR (90 aa)) form a b domain region. A DNA-binding region spans residues 59–65 (LPIANVA). Positions 86–97 (VQECVSEFISFI) are subunit association domain (SAD). Residue Lys140 forms a Glycyl lysine isopeptide (Lys-Gly) (interchain with G-Cter in ubiquitin) linkage. The c domain stretch occupies residues 143–207 (EAMKGEKGIG…ISGVQQIQFS (65 aa)).

Belongs to the NFYB/HAP3 subunit family. In terms of assembly, heterotrimeric transcription factor composed of three components, NF-YA, NF-YB and NF-YC. NF-YB and NF-YC must interact and dimerize for NF-YA association and DNA binding. Interacts with C1QBP. In terms of processing, monoubiquitination at Lys-140 plays an important role in transcriptional activation by allowing the deposition of histone H3 methylations as well as histone H2B monoubiquitination at 'Lys-121'.

It localises to the nucleus. Functionally, component of the sequence-specific heterotrimeric transcription factor (NF-Y) which specifically recognizes a 5'-CCAAT-3' box motif found in the promoters of its target genes. NF-Y can function as both an activator and a repressor, depending on its interacting cofactors. The sequence is that of Nuclear transcription factor Y subunit beta (NFYB) from Bos taurus (Bovine).